The following is a 367-amino-acid chain: Glutamate 5-kinase (367 aa).

Lys9 is an ATP binding site. Residues Ser49, Asp136, and Asn148 each contribute to the substrate site. Residues 168–169 (TD) and 210–216 (TGGMKSK) each bind ATP. In terms of domain architecture, PUA spans 276 to 350 (SGQIEVDAGA…GMQSQDIQAR (75 aa)).

Belongs to the glutamate 5-kinase family.

The protein resides in the cytoplasm. The enzyme catalyses L-glutamate + ATP = L-glutamyl 5-phosphate + ADP. Its pathway is amino-acid biosynthesis; L-proline biosynthesis; L-glutamate 5-semialdehyde from L-glutamate: step 1/2. Catalyzes the transfer of a phosphate group to glutamate to form L-glutamate 5-phosphate. The polypeptide is Glutamate 5-kinase (Bacillus mycoides (strain KBAB4) (Bacillus weihenstephanensis)).